The primary structure comprises 333 residues: Ketol-acid reductoisomerase (NADP(+)) (333 aa).

The 171-residue stretch at 1–171 (MSNDTQPTIA…GGARANIIKT (171 aa)) folds into the KARI N-terminal Rossmann domain. Residues 14–17 (YGSQ), Arg-37, Thr-42, and 72–75 (DMVQ) contribute to the NADP(+) site. The active site involves His-97. Gly-123 serves as a coordination point for NADP(+). The region spanning 172-317 (TFKEETETDL…KKLRAKMVWL (146 aa)) is the KARI C-terminal knotted domain. The Mg(2+) site is built by Asp-180, Glu-184, Glu-216, and Glu-220. Ser-241 serves as a coordination point for substrate.

The protein belongs to the ketol-acid reductoisomerase family. The cofactor is Mg(2+).

It catalyses the reaction (2R)-2,3-dihydroxy-3-methylbutanoate + NADP(+) = (2S)-2-acetolactate + NADPH + H(+). The enzyme catalyses (2R,3R)-2,3-dihydroxy-3-methylpentanoate + NADP(+) = (S)-2-ethyl-2-hydroxy-3-oxobutanoate + NADPH + H(+). It functions in the pathway amino-acid biosynthesis; L-isoleucine biosynthesis; L-isoleucine from 2-oxobutanoate: step 2/4. It participates in amino-acid biosynthesis; L-valine biosynthesis; L-valine from pyruvate: step 2/4. In terms of biological role, involved in the biosynthesis of branched-chain amino acids (BCAA). Catalyzes an alkyl-migration followed by a ketol-acid reduction of (S)-2-acetolactate (S2AL) to yield (R)-2,3-dihydroxy-isovalerate. In the isomerase reaction, S2AL is rearranged via a Mg-dependent methyl migration to produce 3-hydroxy-3-methyl-2-ketobutyrate (HMKB). In the reductase reaction, this 2-ketoacid undergoes a metal-dependent reduction by NADPH to yield (R)-2,3-dihydroxy-isovalerate. In Xanthomonas campestris pv. campestris (strain 8004), this protein is Ketol-acid reductoisomerase (NADP(+)).